The chain runs to 594 residues: Glomulin (594 aa).

An N-acetylalanine modification is found at alanine 2. An alpha-helical region with structural similarity to HEAT repeats region spans residues 2–553 (AVEELQSIIK…EEIPNMPPEM (552 aa)). Residues 300 to 594 (IDQLPMVLSP…STSEENIGIK (295 aa)) form an important for interaction with RBX1 region.

In terms of assembly, interacts with FKBP4 and FKBP1A. Isoform 1: Interacts with RBX1 (via RING domain). Identified in complexes that contain RBX1 plus one of the cullins CUL1, CUL2, CUL3, and CUL4A. Identified in a SCF complex composed of CUL1, RBX1, SKP1, FBXW7 and GLMN. Component of a SCF-like complex consisting of CUL7, RBX1, SKP1, FBXW8 and GLMN. Interacts with unphosphorylated MET and is released upon MET phosphorylation. Phosphorylated on tyrosine residues. In terms of tissue distribution, ubiquitous.

In terms of biological role, regulatory component of cullin-RING-based SCF (SKP1-Cullin-F-box protein) E3 ubiquitin-protein ligase complexes. Inhibits E3 ubiquitin ligase activity by binding to RBX1 (via RING domain) and inhibiting its interaction with the E2 ubiquitin-conjugating enzyme CDC34. Inhibits RBX1-mediated neddylation of CUL1. Required for normal stability and normal cellular levels of key components of SCF ubiquitin ligase complexes, including FBXW7, RBX1, CUL1, CUL2, CUL3, CUL4A, and thereby contributes to the regulation of CCNE1 and MYC levels. Essential for normal development of the vasculature. Contributes to the regulation of RPS6KB1 phosphorylation. In Homo sapiens (Human), this protein is Glomulin (GLMN).